The following is a 161-amino-acid chain: Nucleotide-binding protein amb3630 (161 aa).

The protein belongs to the YajQ family.

Functionally, nucleotide-binding protein. The sequence is that of Nucleotide-binding protein amb3630 from Paramagnetospirillum magneticum (strain ATCC 700264 / AMB-1) (Magnetospirillum magneticum).